Reading from the N-terminus, the 90-residue chain is DNA-directed RNA polymerase subunit omega (90 aa).

It belongs to the RNA polymerase subunit omega family. In terms of assembly, the RNAP catalytic core consists of 2 alpha, 1 beta, 1 beta' and 1 omega subunit. When a sigma factor is associated with the core the holoenzyme is formed, which can initiate transcription.

The catalysed reaction is RNA(n) + a ribonucleoside 5'-triphosphate = RNA(n+1) + diphosphate. Functionally, promotes RNA polymerase assembly. Latches the N- and C-terminal regions of the beta' subunit thereby facilitating its interaction with the beta and alpha subunits. Required for kasugamycin production and aerial mycelium formation in S.kasugaensis and responsible for pleiotropy. In Streptomyces kasugaensis, this protein is DNA-directed RNA polymerase subunit omega (rpoZ).